The sequence spans 60 residues: RYIELAVVADHGMFTKYRVHELVNTVNGFFRSKQDLIKVQKDKTLTSFGEWRERDLLPRI.

The Peptidase M12B domain maps to 1 to 60 (RYIELAVVADHGMFTKYRVHELVNTVNGFFRSKQDLIKVQKDKTLTSFGEWRERDLLPRI). Glu4 contributes to the Ca(2+) binding site.

This sequence belongs to the venom metalloproteinase (M12B) family. P-I subfamily. Monomer. The cofactor is Zn(2+). Expressed by the venom gland.

It localises to the secreted. Its activity is regulated as follows. Completely inhibited by EDTA and EGTA. Partially inhibited by serine proteinase inhibitors PMSF and benzamidine. Not inhibited by cysteine proteinase inhibitors mercury ions and E-64. Is active without cofactors, although the presence of low concentrations of calcium and zinc ions enhanced its ability to convert prothrombin (F2) into active thrombin. In terms of biological role, prothrombin (F2) activator that is cofactor-independent. Also has fibrinolytic and fibrinogenolytic activity. It degrades the Aalpha-chain and more slowly the Bbeta-chain of fibrin and fibrinogen, while the gamma-chain is only partially and slowly affected. A dose-dependent procoagulant activity is shown in human plasma. The polypeptide is Snake venom metalloproteinase bothrojaractivase (Bothrops jararaca (Jararaca)).